Consider the following 206-residue polypeptide: Nucleoside triphosphate pyrophosphatase (206 aa).

Aspartate 71 functions as the Proton acceptor in the catalytic mechanism.

Belongs to the Maf family. Requires a divalent metal cation as cofactor.

Its subcellular location is the cytoplasm. The enzyme catalyses a ribonucleoside 5'-triphosphate + H2O = a ribonucleoside 5'-phosphate + diphosphate + H(+). It catalyses the reaction a 2'-deoxyribonucleoside 5'-triphosphate + H2O = a 2'-deoxyribonucleoside 5'-phosphate + diphosphate + H(+). In terms of biological role, nucleoside triphosphate pyrophosphatase. May have a dual role in cell division arrest and in preventing the incorporation of modified nucleotides into cellular nucleic acids. The polypeptide is Nucleoside triphosphate pyrophosphatase (Rippkaea orientalis (strain PCC 8801 / RF-1) (Cyanothece sp. (strain PCC 8801))).